The following is a 190-amino-acid chain: Riboflavin transporter FmnP (190 aa).

Over 1-5 (MKVKK) the chain is Extracellular. The chain crosses the membrane as a helical span at residues 6–26 (LVVVSMLSSIAFVLMLLNFPF). Over 27–39 (PGLPDYLKIDFSD) the chain is Cytoplasmic. Residues 40–60 (VPAIIAILIYGPLAGIAVEAI) form a helical membrane-spanning segment. Residues 61 to 76 (KNVLQYIIQGSMAGVP) lie on the Extracellular side of the membrane. The helical transmembrane segment at 77-97 (VGQVANFIAGTLFILPTAFLF) threads the bilayer. Over 98–109 (KKLNSAKGLAVS) the chain is Cytoplasmic. The helical transmembrane segment at 110 to 130 (LLLGTAAMTILMSILNYVLIL) threads the bilayer. The Extracellular portion of the chain corresponds to 131-154 (PAYTWFLHSPALSDSALKTAVVAG). A helical membrane pass occupies residues 155–175 (ILPFNMIKGIVITVVFSLIFI). At 176–190 (KLKPWIEQQRSAHIH) the chain is on the cytoplasmic side.

It belongs to the prokaryotic riboflavin transporter (P-RFT) (TC 2.A.87) family. Forms a stable energy-coupling factor (ECF) transporter complex composed of a membrane-embedded substrate-binding protein (S component), 2 ATP-binding proteins (A component) and 2 transmembrane proteins (T component). May be able to interact with more than 1 S component at a time.

Its subcellular location is the cell membrane. Its activity is regulated as follows. Inhibited by excess of riboflavin or FMN. Also inhibited by protonophores such as CCCP and FCCP or in the absence of glucose. In terms of biological role, mediates uptake of riboflavin and roseoflavin, a toxic riboflavin analog; may also transport FMN. Probably a riboflavin-binding protein that interacts with the energy-coupling factor (ECF) ABC-transporter complex. Unlike classic ABC transporters this ECF transporter provides the energy necessary to transport a number of different substrates. The substrates themselves are bound by transmembrane, not extracytoplasmic soluble proteins. The chain is Riboflavin transporter FmnP (fmnP) from Bacillus subtilis (strain 168).